The chain runs to 363 residues: MIIDTTEVQDLNSFSRLESLKEVYGIIGMFLPILTLVLGITIGVLVIVWLEREISAGIQQRIGPEYAGPLGILQALADGTKLIFKENLFPSRGDTRLFSIGPSIAVISILLSYSVIPFSYHLVLSDLNIGVFLWIAISSIAPIGLLMSGYGSNNKYSFLSGLRAAAQSISYEIPLTLLCVINISLSNSSSTVDIVEAQSKYGFWGWNLWRQPIGFFIFLISSLAECERLPFDLPEAEEELVAGYQTEYSGIKFGLFYVASYLNLLVSSLFVTVLYLGGWNISIPYIFVPELFEINKVGRVFGTTIGIFITLAKTYFFLFISITTRWTLPRLRIDQLLNLGWKFLLPISLGNLLLTTSFQLLSL.

A run of 6 helical transmembrane segments spans residues 30–50 (FLPI…IVWL), 104–124 (IAVI…HLVL), 129–149 (IGVF…LMSG), 248–268 (YSGI…LVSS), 300–320 (VFGT…FLFI), and 343–363 (FLLP…LLSL).

The protein belongs to the complex I subunit 1 family. NDH is composed of at least 16 different subunits, 5 of which are encoded in the nucleus.

The protein localises to the plastid. The protein resides in the chloroplast thylakoid membrane. It carries out the reaction a plastoquinone + NADH + (n+1) H(+)(in) = a plastoquinol + NAD(+) + n H(+)(out). The enzyme catalyses a plastoquinone + NADPH + (n+1) H(+)(in) = a plastoquinol + NADP(+) + n H(+)(out). In terms of biological role, NDH shuttles electrons from NAD(P)H:plastoquinone, via FMN and iron-sulfur (Fe-S) centers, to quinones in the photosynthetic chain and possibly in a chloroplast respiratory chain. The immediate electron acceptor for the enzyme in this species is believed to be plastoquinone. Couples the redox reaction to proton translocation, and thus conserves the redox energy in a proton gradient. The sequence is that of NAD(P)H-quinone oxidoreductase subunit 1, chloroplastic from Eucalyptus globulus subsp. globulus (Tasmanian blue gum).